The primary structure comprises 766 residues: 5-methyltetrahydropteroyltriglutamate--homocysteine methyltransferase (766 aa).

5-methyltetrahydropteroyltri-L-glutamate-binding positions include 16-19 and Lys119; that span reads RELK. L-homocysteine is bound by residues 440 to 442 and Glu493; that span reads IGS. L-methionine is bound by residues 440 to 442 and Glu493; that span reads IGS. 5-methyltetrahydropteroyltri-L-glutamate contacts are provided by residues 524–525 and Trp570; that span reads RC. Asp608 provides a ligand contact to L-homocysteine. An L-methionine-binding site is contributed by Asp608. Glu614 lines the 5-methyltetrahydropteroyltri-L-glutamate pocket. Zn(2+)-binding residues include His650, Cys652, and Glu674. Residue His703 is the Proton donor of the active site. Cys735 contributes to the Zn(2+) binding site.

This sequence belongs to the vitamin-B12 independent methionine synthase family. Requires Zn(2+) as cofactor.

It catalyses the reaction 5-methyltetrahydropteroyltri-L-glutamate + L-homocysteine = tetrahydropteroyltri-L-glutamate + L-methionine. It participates in amino-acid biosynthesis; L-methionine biosynthesis via de novo pathway; L-methionine from L-homocysteine (MetE route): step 1/1. In terms of biological role, catalyzes the transfer of a methyl group from 5-methyltetrahydrofolate to homocysteine resulting in methionine formation. The polypeptide is 5-methyltetrahydropteroyltriglutamate--homocysteine methyltransferase (Pseudomonas aeruginosa (strain LESB58)).